The primary structure comprises 372 residues: Pyruvylated Gal-beta-1,3-epitope synthesis protein 5 (372 aa).

The Cytoplasmic segment spans residues 1-12 (MGLPLRIFAGNG). Residues 13 to 35 (IGGWCLRLFLFGSLILLLRPLIF) traverse the membrane as a helical; Signal-anchor for type II membrane protein segment. Residues 36 to 372 (YSNTTMKKLK…LRIIEQWKQL (337 aa)) are Lumenal-facing. Residues N38 and N128 are each glycosylated (N-linked (GlcNAc...) asparagine).

The protein resides in the golgi apparatus membrane. In terms of biological role, involved in cell wall biogenesis. Has a role in the addition of Gal-beta1,3 moeities to galactomannans and their subsequent pyruvylation. Has a role in meiosis. This is Pyruvylated Gal-beta-1,3-epitope synthesis protein 5 (pvg5) from Schizosaccharomyces pombe (strain 972 / ATCC 24843) (Fission yeast).